Here is a 374-residue protein sequence, read N- to C-terminus: Organelle RRM domain-containing protein 1, chloroplastic (374 aa).

The N-terminal 54 residues, 1-54 (MEALIASTSFFVPISNSSSSHIINNRFFPSFYSPNLNFGTFRKTSLSSSHLVFS), are a transit peptide targeting the chloroplast. Basic and acidic residues predominate over residues 258–271 (KDYEGDSTQDSRDQ). The tract at residues 258 to 279 (KDYEGDSTQDSRDQDDSESPPV) is disordered. Residues 282 to 360 (KKLFITGLSF…WMIVVDVAKT (79 aa)) enclose the RRM domain.

In terms of assembly, interacts with PCMP-H51/CRR28 and PCMP-H12/OTP82. Interacts with MORF8/RIP1, MORF2/RIP2 and VAR3/OZ1.

Its subcellular location is the plastid. The protein resides in the chloroplast. Involved in C-to-U editing of chloroplastic RNA. Functions as major chloroplastic editing factor. Controls 62 percent of the chloroplastic editing sites. Binds RNA close to ORRM1-dependent editing sites in vitro. Binds the editing recognition trans-factors PCMP-H51/CRR28 and PCMP-H12/OTP82. The protein is Organelle RRM domain-containing protein 1, chloroplastic of Arabidopsis thaliana (Mouse-ear cress).